Consider the following 212-residue polypeptide: Regulatory protein RecX (212 aa).

It belongs to the RecX family.

The protein localises to the cytoplasm. Modulates RecA activity. The polypeptide is Regulatory protein RecX (Clostridium perfringens (strain SM101 / Type A)).